We begin with the raw amino-acid sequence, 351 residues long: Ion-translocating oxidoreductase complex subunit D (351 aa).

Transmembrane regions (helical) follow at residues 18-38, 40-60, 87-107, and 121-141; these read IMLL…YFFG, GSLI…GAVL, LPPL…IVIA, and PAMV…TSWL. Threonine 185 is subject to FMN phosphoryl threonine. The next 5 membrane-spanning stretches (helical) occupy residues 211 to 231, 241 to 261, 264 to 284, 298 to 318, and 320 to 340; these read VLAG…GLLL, IPVS…MIAP, FASP…FFIA, LIFG…GGYP, and GVAF…HYTQ.

The protein belongs to the NqrB/RnfD family. The complex is composed of six subunits: RnfA, RnfB, RnfC, RnfD, RnfE and RnfG. It depends on FMN as a cofactor.

The protein localises to the cell inner membrane. Part of a membrane-bound complex that couples electron transfer with translocation of ions across the membrane. The protein is Ion-translocating oxidoreductase complex subunit D of Yersinia pseudotuberculosis serotype I (strain IP32953).